Here is a 121-residue protein sequence, read N- to C-terminus: Small ribosomal subunit protein uS13 (121 aa).

Residues 96–121 form a disordered region; the sequence is PVRGQNTKNNARTRKGKAVAIAGKKK. The segment covering 106 to 121 has biased composition (basic residues); the sequence is ARTRKGKAVAIAGKKK.

Belongs to the universal ribosomal protein uS13 family. As to quaternary structure, part of the 30S ribosomal subunit. Forms a loose heterodimer with protein S19. Forms two bridges to the 50S subunit in the 70S ribosome.

In terms of biological role, located at the top of the head of the 30S subunit, it contacts several helices of the 16S rRNA. In the 70S ribosome it contacts the 23S rRNA (bridge B1a) and protein L5 of the 50S subunit (bridge B1b), connecting the 2 subunits; these bridges are implicated in subunit movement. Contacts the tRNAs in the A and P-sites. In Streptococcus pneumoniae serotype 4 (strain ATCC BAA-334 / TIGR4), this protein is Small ribosomal subunit protein uS13.